A 536-amino-acid polypeptide reads, in one-letter code: Transcriptional regulator RPN4 (536 aa).

Low complexity-rich tracts occupy residues glutamine 154 to glutamine 181 and serine 361 to proline 370. 3 disordered regions span residues glutamine 154–arginine 196, valine 353–methionine 375, and glutamate 393–threonine 434. A compositionally biased stretch (basic and acidic residues) spans glutamate 393–lysine 411. The C2H2-type zinc finger occupies histidine 440–histidine 471.

It localises to the nucleus. In terms of biological role, transcriptional activator of a number of genes encoding proteasomal subunits. Binds to the DNA sequence 5'-GAAGGCAAAA-3', enriched in regions upstream of proteasome genes. This chain is Transcriptional regulator RPN4 (RPN4), found in Candida albicans (strain SC5314 / ATCC MYA-2876) (Yeast).